Consider the following 883-residue polypeptide: Translation initiation factor IF-2 (883 aa).

2 disordered regions span residues 1–96 (MVDT…RSGM) and 132–259 (QRRA…RGRL). A compositionally biased stretch (low complexity) spans 57-66 (PAEPAAAAPE). Over residues 72-87 (TPAPPAVSPRQQPRPS) the composition is skewed to pro residues. Residues 132–188 (QRRAAQELVDKAEREAAEVRRKAEEERHRHEEETKRKAETEAKKRFGEAEPAKKPAD) are compositionally biased toward basic and acidic residues. Over residues 191–217 (PASTSTTTTAPRAPVTTTTRPPAVAAE) the composition is skewed to low complexity. Residues 380–551 (PRSPVVTVMG…ALQAELLDLK (172 aa)) form the tr-type G domain. Residues 389–396 (GHVDHGKT) are G1. Residue 389 to 396 (GHVDHGKT) participates in GTP binding. The G2 stretch occupies residues 414–418 (GITQH). The G3 stretch occupies residues 437–440 (DTPG). Residues 437-441 (DTPGH) and 491-494 (NKID) each bind GTP. A G4 region spans residues 491–494 (NKID). The interval 527 to 529 (SAK) is G5.

The protein belongs to the TRAFAC class translation factor GTPase superfamily. Classic translation factor GTPase family. IF-2 subfamily.

The protein localises to the cytoplasm. Functionally, one of the essential components for the initiation of protein synthesis. Protects formylmethionyl-tRNA from spontaneous hydrolysis and promotes its binding to the 30S ribosomal subunits. Also involved in the hydrolysis of GTP during the formation of the 70S ribosomal complex. This is Translation initiation factor IF-2 from Rhodopseudomonas palustris (strain BisB5).